The primary structure comprises 55 residues: Large ribosomal subunit protein bL33 (55 aa).

The protein belongs to the bacterial ribosomal protein bL33 family.

The sequence is that of Large ribosomal subunit protein bL33 from Rhizobium johnstonii (strain DSM 114642 / LMG 32736 / 3841) (Rhizobium leguminosarum bv. viciae).